A 1359-amino-acid polypeptide reads, in one-letter code: MRVGVSESEDSDGHVIEDEDLEMARQIENERKEKRAQKLKEKREREGKPPPKKRPAKKRKASSSEEDDDDEEESPRKSSKKSRKRAKSESESDESDEEEDRKKSKSKKKVDQKKKEKSKKKRTTSSSEDEDSDEEREQKSKKKSKKTKKQTSSESSEESEEERKVKKSKKNKEKSVKKRAETSEESDEDEKPSKKSKKGLKKKAKSESESESEDEKEVKKSKKKSKKVVKKESESEDEAPEKKKTEKRKRSKTSSEESSESEKSDEEEEEKESSPKPKKKKPLAVKKLSSDEESEESDVEVLPQKKKRGAVTLISDSEDEKDQKSESEASDVEEKVSKKKAKKQESSESGSDSSEGSITVNRKSKKKEKPEKKKKGIIMDSSKLQKETIDAERAEKERRKRLEKKQKEFNGIVLEEGEDLTEMLTGTSSQRKLKSVVLDPDSSTVDEESKKPVEVHNSLVRILKPHQAHGIQFMYDCACESLDRLDTEGSGGILAHCMGLGKTLQVITFLHTVLMHEKIGEKCKRVLVVVPKNVIINWFKEFQKWLVDNDEELDTIDVNELDSYKTIEDRRRALKAWHSSKTPSVMIIGYDLFRILTVEDDPKKKKPKNRNRRLEKAKEDFRKYLQNPGPDMVVCDEAHKLKNDDSALSKCMVKILTKRRICLTGTPLQNNLMEYHCMVNFVKPGLLGTKTEFANRFVNIINRGRTKDASPLEVSFMKRRCHVLYDHLKKCVDRKDYRVLTEAIPPKQEYVINVRQTERQCALYNAFLNDIVGDSGLSKRLLPDYHMFSRIWTHPYQLVLHEQRMERERVMREDAEEEADFIDDGDGSESESEGSFKSGSESDSGKSVVLSSDDEGSSKKKKNGNKPEIKKTAPQKKRKFLNSDDEDEEDGEDTAMAILQDGIRQSKRLAGEEADLRDTDTPPEYTGWFARLGLVKEEDRDDFALSNKLILLVEIIKKCEEIGDKLLVFSQSLESLTLIKRMLEYMAGTGQWFADGHEALNAEGEETWSWLEGEDYMTIDGSVQSGKRDAVQTSFNDPLNLRARLMLISTRAGSLGTNMVAANRVIIFDACWNPSHDTQSLFRVYRFGQTKPVYIYRFIAQGTMEERIYKRQVTKESTSMRVVDEAQIQRHYLGNDLTELYQFTPSTFDPDVEISCAPPKDRLLADVIHKNQHAVVDYIEHDTLFANVEDEKLTEQEMKDAWTDYEKDKSGMPVRAQYAAPPMPGFPNGMIVGQNVQALLQNRMNQGIRVDQMQHDILFKELQKMRIKDAGTAVKIVLLRNLLEQILPYIPDEMRGGMSEFNTHFIRLVHETDRKMETPADLLRKSLESFKTVIKMVKMIPTCREPLARMTRDYPYLFA.

Positions 1–402 (MRVGVSESED…RAEKERRKRL (402 aa)) are disordered. Residues 11-49 (SDGHVIEDEDLEMARQIENERKEKRAQKLKEKREREGKP) are compositionally biased toward basic and acidic residues. Residues 50 to 61 (PPKKRPAKKRKA) are compositionally biased toward basic residues. A compositionally biased stretch (acidic residues) spans 64–73 (SEEDDDDEEE). Composition is skewed to basic residues over residues 77 to 86 (KSSKKSRKRA), 103 to 123 (KSKS…KKRT), 139 to 149 (KSKKKSKKTKK), 165 to 177 (VKKS…KSVK), 194 to 204 (KKSKKGLKKKA), and 219 to 229 (KKSKKKSKKVV). Acidic residues predominate over residues 257 to 271 (ESSESEKSDEEEEEK). A compositionally biased stretch (basic and acidic residues) spans 321 to 336 (KDQKSESEASDVEEKV). The span at 347 to 357 (SESGSDSSEGS) shows a compositional bias: low complexity. The span at 362-376 (RKSKKKEKPEKKKKG) shows a compositional bias: basic residues. Residues 383-397 (KLQKETIDAERAEKE) are compositionally biased toward basic and acidic residues. The Helicase ATP-binding domain maps to 483-685 (DRLDTEGSGG…HCMVNFVKPG (203 aa)). Residue 496-503 (HCMGLGKT) participates in ATP binding. Positions 636–639 (DEAH) match the DEAH box motif. The disordered stretch occupies residues 809–891 (RVMREDAEEE…NSDDEDEEDG (83 aa)). Over residues 814 to 832 (DAEEEADFIDDGDGSESES) the composition is skewed to acidic residues. Positions 833 to 847 (EGSFKSGSESDSGKS) are enriched in low complexity. Residues 951–1134 (LLVEIIKKCE…EAQIQRHYLG (184 aa)) form the Helicase C-terminal domain.

The protein belongs to the SNF2/RAD54 helicase family.

It is found in the nucleus. The catalysed reaction is ATP + H2O = ADP + phosphate + H(+). Functionally, required for embryonic development and gonadogenesis. Also, functions redundantly with the transcriptional repressor lin-35 to regulate somatic gonad development. This chain is Transcriptional regulator ATRX homolog, found in Caenorhabditis elegans.